The sequence spans 109 residues: Hainantoxin-XVIII-5 (109 aa).

Residues Met-1–Ala-18 form the signal peptide. The propeptide occupies Phe-19–Ala-46. 4 disulfides stabilise this stretch: Cys-47/Cys-62, Cys-55/Cys-68, Cys-59/Cys-108, and Cys-61/Cys-81.

It belongs to the neurotoxin 25 family. F7 subfamily. As to expression, expressed by the venom gland.

The protein localises to the secreted. Its function is as follows. Putative ion channel inhibitor. This is Hainantoxin-XVIII-5 from Cyriopagopus hainanus (Chinese bird spider).